A 318-amino-acid polypeptide reads, in one-letter code: Ankyrin repeat and SOCS box protein 7 (318 aa).

ANK repeat units follow at residues Q13–G42, N46–V75, G80–I109, D116–P145, K149–I178, N180–L208, and D213–T242. One can recognise an SOCS box domain in the interval L265 to I318.

The protein belongs to the ankyrin SOCS box (ASB) family. In terms of assembly, interacts with CUL5. Interacts with RNF7. Interacts with PSRC1.

It localises to the nucleus. Its subcellular location is the cytoplasm. It participates in protein modification; protein ubiquitination. Functionally, probable substrate-recognition component of a SCF-like ECS (Elongin-Cullin-SOCS-box protein) E3 ubiquitin-protein ligase complex which mediates the ubiquitination and subsequent proteasomal degradation of target proteins. Plays a role in spindle dynamics and genome integrity by targeting the mitotic progression protein PSRC1 for proteasomal degradation in a cell cycle-dependent manner. Also participates in meiosis by mediating the proper attachment between kinetochores and microtubules. This chain is Ankyrin repeat and SOCS box protein 7 (Asb7), found in Mus musculus (Mouse).